Here is a 303-residue protein sequence, read N- to C-terminus: Protoheme IX farnesyltransferase (303 aa).

Helical transmembrane passes span 25-45 (MGLVQGNLIPAFAGSWLAIVL), 54-74 (IPQILMMLVGSTLIMGGACAL), 118-138 (LLFALNIPSGVIGLLGIVGYV), 151-171 (WNTVIGSFPGAVPPLIGWTAI), 177-197 (LVAVALFLVIFCWQPIHFYAL), 230-250 (LVVLLPLPFLLSSLGVTFIVL), and 280-300 (FIYSLNYLVVFFVLVVVISLI).

It belongs to the UbiA prenyltransferase family. Protoheme IX farnesyltransferase subfamily. Interacts with CtaA.

The protein localises to the cell membrane. The catalysed reaction is heme b + (2E,6E)-farnesyl diphosphate + H2O = Fe(II)-heme o + diphosphate. It functions in the pathway porphyrin-containing compound metabolism; heme O biosynthesis; heme O from protoheme: step 1/1. In terms of biological role, converts heme B (protoheme IX) to heme O by substitution of the vinyl group on carbon 2 of heme B porphyrin ring with a hydroxyethyl farnesyl side group. The sequence is that of Protoheme IX farnesyltransferase from Staphylococcus saprophyticus subsp. saprophyticus (strain ATCC 15305 / DSM 20229 / NCIMB 8711 / NCTC 7292 / S-41).